Here is a 294-residue protein sequence, read N- to C-terminus: Cyclin-dependent kinase A-1 (294 aa).

Positions 4-287 (YEKEEKIGEG…ARQALEHEYF (284 aa)) constitute a Protein kinase domain. ATP-binding positions include 10–18 (IGEGTYGVV) and Lys33. Thr14 bears the Phosphothreonine mark. Phosphotyrosine is present on Tyr15. Asp127 serves as the catalytic Proton acceptor. Position 161 is a phosphothreonine; by CAK (Thr161).

It belongs to the protein kinase superfamily. CMGC Ser/Thr protein kinase family. CDC2/CDKX subfamily. In terms of processing, phosphorylated at Thr-161 by CDKD-1. Expressed in the dividing region of the root apex and in differentiated cells such as those in the sclerenchyma, pericycle and parenchyma of the central cylinder.

The catalysed reaction is L-seryl-[protein] + ATP = O-phospho-L-seryl-[protein] + ADP + H(+). It carries out the reaction L-threonyl-[protein] + ATP = O-phospho-L-threonyl-[protein] + ADP + H(+). It catalyses the reaction [DNA-directed RNA polymerase] + ATP = phospho-[DNA-directed RNA polymerase] + ADP + H(+). The protein is Cyclin-dependent kinase A-1 (CDKA-1) of Oryza sativa subsp. japonica (Rice).